The chain runs to 80 residues: Exodeoxyribonuclease 7 small subunit (80 aa).

Belongs to the XseB family. As to quaternary structure, heterooligomer composed of large and small subunits.

It is found in the cytoplasm. The catalysed reaction is Exonucleolytic cleavage in either 5'- to 3'- or 3'- to 5'-direction to yield nucleoside 5'-phosphates.. Bidirectionally degrades single-stranded DNA into large acid-insoluble oligonucleotides, which are then degraded further into small acid-soluble oligonucleotides. The polypeptide is Exodeoxyribonuclease 7 small subunit (Phenylobacterium zucineum (strain HLK1)).